The primary structure comprises 316 residues: Aspartate carbamoyltransferase catalytic subunit (316 aa).

Carbamoyl phosphate-binding residues include Arg-56 and Thr-57. An L-aspartate-binding site is contributed by Lys-84. The carbamoyl phosphate site is built by Arg-106, His-139, and Gln-142. Positions 172 and 226 each coordinate L-aspartate. Carbamoyl phosphate-binding residues include Gly-267 and Pro-268.

It belongs to the aspartate/ornithine carbamoyltransferase superfamily. ATCase family. Heterododecamer (2C3:3R2) of six catalytic PyrB chains organized as two trimers (C3), and six regulatory PyrI chains organized as three dimers (R2).

It catalyses the reaction carbamoyl phosphate + L-aspartate = N-carbamoyl-L-aspartate + phosphate + H(+). It functions in the pathway pyrimidine metabolism; UMP biosynthesis via de novo pathway; (S)-dihydroorotate from bicarbonate: step 2/3. Its function is as follows. Catalyzes the condensation of carbamoyl phosphate and aspartate to form carbamoyl aspartate and inorganic phosphate, the committed step in the de novo pyrimidine nucleotide biosynthesis pathway. This chain is Aspartate carbamoyltransferase catalytic subunit, found in Mycobacterium sp. (strain JLS).